The chain runs to 297 residues: Averufin oxidase stcO (297 aa).

The chain crosses the membrane as a helical span at residues 277 to 297; that stretch reads VVVLGVCILLLLGGLLYSIKA.

It belongs to the avfA family.

It is found in the membrane. It functions in the pathway mycotoxin biosynthesis; sterigmatocystin biosynthesis. Its function is as follows. Averufin oxidase; part of the gene cluster that mediates the biosynthesis of sterigmatocystin (ST), a polyketide-derived furanocoumarin which is part of the most toxic and carcinogenic compounds among the known mycotoxins. The first step in the biosynthesis of sterigmatocystin is the production of hexanoate by the fatty acid synthase (FAS) units stcJ and stcK. The polyketide backbone is assembled by the non-reducing polyketide synthase stcA by condensation of the starter hexanoyl-CoA and 7 malonyl-CoA extender units followed by cyclization and release of norsolorinic acid. Norsolorinic acid is the first stable intermediate in the biosynthesis of sterigmatocystin and is converted into averantin (AVN) by the ketoreductase stcE which reduces the hexanoate ketone to an alcohol. Averantin is then oxidized into 5'-hydroxyaverantin (HAVN) by the cytochrome P450 monooxygenase stcF. 5'-hydroxyaverantin is further converted to 5'-oxyaverantin (OAVN) by the 5'-hydroxyaverantin dehydrogenase stcG. The next step is the conversion of OAVN into averufin (AVF) which is catalyzed by a yet to be identified enzyme. The cytochrome P450 monooxygenase stcB and the flavin-binding monooxygenase stcW are both required for the conversion of averufin to 1-hydroxyversicolorone. The esterase stcI probably catalyzes the formation of versiconal hemiacetal acetate from 1-hydroxyversicolorone. The oxydoreductase stcN then probably catalyzes the biosynthetic step from versiconal to versicolorin B (VERB). The next step is performed by the versicolorin B desaturase stcL to produce versicolorin A (VERA). The ketoreductase stcU and the cytochrome P450 monooxygenase stcS are involved in the conversion of versicolorin A to demethylsterigmatocystin. The Baeyer-Villiger oxidas stcQ and the reductase stcR might be involved in the biosynthetic step from versicolorin A to demethylsterigmatocystin. The final step in the biosynthesis of sterigmatocystin is the methylation of demethylsterigmatocystin catalyzed by the methyltransferase stcP. The polypeptide is Averufin oxidase stcO (Emericella nidulans (strain FGSC A4 / ATCC 38163 / CBS 112.46 / NRRL 194 / M139) (Aspergillus nidulans)).